Here is a 130-residue protein sequence, read N- to C-terminus: Cyclin-dependent kinase 4 inhibitor B (130 aa).

ANK repeat units follow at residues 5 to 34 (GSDA…DPNA), 38 to 66 (FGRR…EPNC), 71 to 100 (TLTR…RLDV), and 104 to 130 (WGRL…ATGD). Phosphothreonine is present on T12.

Belongs to the CDKN2 cyclin-dependent kinase inhibitor family. Heterodimer of CDKN2B with CDK4 or CDK6. As to expression, expression abundant in lung, less abundant in testis, barely detectable in liver, and not detectable in neonatal kidney, adult kidney, brain, heart, or spleen.

Functionally, interacts strongly with CDK4 and CDK6. Potent inhibitor. Potential effector of TGF-beta induced cell cycle arrest. This is Cyclin-dependent kinase 4 inhibitor B (Cdkn2b) from Rattus norvegicus (Rat).